The primary structure comprises 209 residues: Putative amino acid efflux protein YcgF (209 aa).

6 helical membrane-spanning segments follow: residues 1–21, 39–59, 62–82, 110–130, 147–167, and 184–204; these read MNIFLSYIVLGLSLSAPVGPV, IFGLGAMTADGLYMLFIYFGL, FLTAPFVKTFLWLFGFFVLTY, FASGFLISLSNPLSILFWLGI, LLIYSSGIMIGILIWDFCMAI, and LTGIAGVSLLVFGFYFGYQGI.

This sequence belongs to the Rht family.

Its subcellular location is the cell membrane. This Bacillus subtilis (strain 168) protein is Putative amino acid efflux protein YcgF (ycgF).